A 156-amino-acid chain; its full sequence is MPRKGHVQKREVMPDPVYDDKTVTKLINNIMLDGKKGTAQKIVYGAFDIIKETTGEDALEVFYKAMNNIMPILEVKTRRIGGANYQVPIEVRPERRQTLGLRWLTTYTRARGEKTMVEKLAKEIMDAANNTGASVKKREDVHKMAEANKAFAHYRY.

Belongs to the universal ribosomal protein uS7 family. Part of the 30S ribosomal subunit. Contacts proteins S9 and S11.

Functionally, one of the primary rRNA binding proteins, it binds directly to 16S rRNA where it nucleates assembly of the head domain of the 30S subunit. Is located at the subunit interface close to the decoding center, probably blocks exit of the E-site tRNA. In Finegoldia magna (strain ATCC 29328 / DSM 20472 / WAL 2508) (Peptostreptococcus magnus), this protein is Small ribosomal subunit protein uS7.